A 548-amino-acid polypeptide reads, in one-letter code: Chaperonin GroEL 1 (548 aa).

Residues 30-33 (TLGP), Lys51, 87-91 (DGTTT), Gly415, 479-481 (NAA), and Asp495 each bind ATP.

Belongs to the chaperonin (HSP60) family. Forms a cylinder of 14 subunits composed of two heptameric rings stacked back-to-back. Interacts with the co-chaperonin GroES.

The protein localises to the cytoplasm. It catalyses the reaction ATP + H2O + a folded polypeptide = ADP + phosphate + an unfolded polypeptide.. In terms of biological role, together with its co-chaperonin GroES, plays an essential role in assisting protein folding. The GroEL-GroES system forms a nano-cage that allows encapsulation of the non-native substrate proteins and provides a physical environment optimized to promote and accelerate protein folding. The polypeptide is Chaperonin GroEL 1 (Anaeromyxobacter dehalogenans (strain 2CP-C)).